The following is a 210-amino-acid chain: Outer-membrane lipoprotein carrier protein (210 aa).

The N-terminal stretch at 1 to 23 (MKKRIQKTILTVLFSSLSSIAFA) is a signal peptide.

It belongs to the LolA family. In terms of assembly, monomer.

Its subcellular location is the periplasm. Its function is as follows. Participates in the translocation of lipoproteins from the inner membrane to the outer membrane. Only forms a complex with a lipoprotein if the residue after the N-terminal Cys is not an aspartate (The Asp acts as a targeting signal to indicate that the lipoprotein should stay in the inner membrane). This is Outer-membrane lipoprotein carrier protein from Haemophilus ducreyi (strain 35000HP / ATCC 700724).